The chain runs to 455 residues: ATP-dependent protease ATPase subunit HslU (455 aa).

ATP-binding positions include valine 23, 65–70 (GVGKTE), aspartate 266, glutamate 333, and arginine 405.

This sequence belongs to the ClpX chaperone family. HslU subfamily. A double ring-shaped homohexamer of HslV is capped on each side by a ring-shaped HslU homohexamer. The assembly of the HslU/HslV complex is dependent on binding of ATP.

Its subcellular location is the cytoplasm. Its function is as follows. ATPase subunit of a proteasome-like degradation complex; this subunit has chaperone activity. The binding of ATP and its subsequent hydrolysis by HslU are essential for unfolding of protein substrates subsequently hydrolyzed by HslV. HslU recognizes the N-terminal part of its protein substrates and unfolds these before they are guided to HslV for hydrolysis. The chain is ATP-dependent protease ATPase subunit HslU from Xanthomonas oryzae pv. oryzae (strain MAFF 311018).